The chain runs to 1375 residues: MKASEMARPPMRPGNPHAFASPATTPSRTASPNNAQGANVRTTQGGNQAGASEQQQPLDCFVVYELFASAVTALVSFFLVKDCGAVALNYRTFVSKVEPQQEEGKIVTDLDRLYWLTSVHVHWFSSGTLLVSTSTERTLALQCLGDLSEDEQQKLVDRCIRVAPNAMLASISSFDDPRQLSADDSNRRTSKKKAKMDSLEQNIEKWRMSVQRWLSRRGYSLPNLDKNSAWVTIRVGQLAQFPAMSPHLPTSARDVLWPRSLCFMQSLVPDDLKWFEVPGSAGFRDPIDAAQDWFTGQLERDKILDMQRKAKKAEEDAMRRKDEAPGLYPSSPFTARTGVYGDLQPVSGVYPTPPDGIVPGTGISSTDTPSVSGTASNVVLVPGGNTPAINLSAPQDYTTTDNQQHASTSPTFPAPLEPFQTSGEDDDLFEDMEGDGFGGPDVEEADFDFFDGPDGDDVNMADAPALPETTNKPHKQLNNDVAMAHEEEHSVKEEMSDPLAALESALAAPYRPINDGMPEEKVSEKEAKAVVPVEALATSPAQIKQNPPAKKEATPPLSPSAIAKTLQPSPPKKQSSFPASLQRTNSAFHSLDFSRRLSLVDAKYQDGRFAARIEKTEDDESAVNPGRLKSLKDLPLLNKLRYAVASASTAKSTEALSLARAVSDDSASDSESETSDMSEGSPEDPVDTHPLPYLGRLIIPAKRKLPTEGHGTPLSVTSFAESLAGDWQDSNSLLLDESSLTFFEPNTWDWSIPDLSMEPPEEKPLNGKESIAVTQILTDQIVSATLDLLDENALVESTSSIEPSSETRWQICIKELFPKAAECTLSALIAIHDVFPDLSAQAKGQQRPPPRKPNESNAIPSNHMYPMNPPFIRVRRAETHWDLLPPSIAFWEPLGLAPASPPKNVVAFCIYPHSASLRPILDRFMLNLQLAYDTCKLGSHARVETVIEYEGGLVPVKANSQTSAKEAFRALKDTCIQLGKLLAIQYAQLGEQQDTKIDAFVVYMVDPFGNPAALWELCSAFWSLFQAYGQGPPGRSDPTPKPDLVLQIIPIKYLASFDVPVILDAATYVSLAREVYDRCPPSVASTDKTPLSIYKAPAFQLEESLPRNVQFKLLSEPPQDLLRENSYMHIAYAISLDGNWLTAAWSDSCGKSQAVVSYHLGTRVFGDIAKEIWQTTIEILQARRVQWRVCIAKSGPLDREELETWVLLITCPTQVNLFLTILTVIEDPPYKFTPTTPAPSNSSAQANTNTPGSTPQTGVSPDPTIGLTPAATPSADPAPDPAADPEARLIDVTDETWGIILAHRLHNSNSTNQFSPALISGLLVKRGITHATSNSIHHPIPDPLPGPITVAVNILWIGAVGSTWKRAAESRGTQY.

The disordered stretch occupies residues 1–51 (MKASEMARPPMRPGNPHAFASPATTPSRTASPNNAQGANVRTTQGGNQAGA). The span at 22-51 (PATTPSRTASPNNAQGANVRTTQGGNQAGA) shows a compositional bias: polar residues. Coiled-coil stretches lie at residues 182 to 216 (ADDS…WLSR) and 297 to 324 (QLER…KDEA). Residues 313–324 (AEEDAMRRKDEA) are compositionally biased toward basic and acidic residues. Disordered stretches follow at residues 313–333 (AEED…SSPF), 350–370 (YPTP…DTPS), 397–417 (YTTT…APLE), 537–581 (ATSP…PASL), 660–689 (RAVS…VDTH), 841–862 (QAKG…IPSN), and 1233–1285 (TPTT…AADP). Over residues 397 to 411 (YTTTDNQQHASTSPT) the composition is skewed to polar residues. Residues 666-685 (SASDSESETSDMSEGSPEDP) show a composition bias toward acidic residues. The segment covering 1233 to 1259 (TPTTPAPSNSSAQANTNTPGSTPQTGV) has biased composition (polar residues).

Belongs to the Mediator complex subunit 13 family. As to quaternary structure, component of the SRB8-11 complex, which itself associates with the Mediator complex.

The protein resides in the nucleus. Component of the SRB8-11 complex. The SRB8-11 complex is a regulatory module of the Mediator complex which is itself involved in regulation of basal and activated RNA polymerase II-dependent transcription. The SRB8-11 complex may be involved in the transcriptional repression of a subset of genes regulated by Mediator. It may inhibit the association of the Mediator complex with RNA polymerase II to form the holoenzyme complex. The chain is Mediator of RNA polymerase II transcription subunit 13 (SSN2) from Phaeosphaeria nodorum (strain SN15 / ATCC MYA-4574 / FGSC 10173) (Glume blotch fungus).